Consider the following 356-residue polypeptide: 1,2-phenylacetyl-CoA epoxidase, subunit E (356 aa).

In terms of domain architecture, FAD-binding FR-type spans 2–106; it reads TTFHSLTVAK…MVPQGHFGYQ (105 aa). The interval 112–228 is oxidoreductase; the sequence is QGRYLAIAAG…AAMMDDAETA (117 aa). Residues 262 to 354 enclose the 2Fe-2S ferredoxin-type domain; that stretch reads QKVTVRQDGR…DVVVDFDAKG (93 aa). Positions 299, 304, 307, and 337 each coordinate [2Fe-2S] cluster.

In the N-terminal section; belongs to the FAD-binding oxidoreductase type 6 family. The cofactor is [2Fe-2S] cluster. Requires FAD as cofactor.

The protein operates within aromatic compound metabolism; phenylacetate degradation. Its function is as follows. Component of 1,2-phenylacetyl-CoA epoxidase multicomponent enzyme system which catalyzes the reduction of phenylacetyl-CoA (PA-CoA) to form 1,2-epoxyphenylacetyl-CoA. The subunit E is a reductase with a preference for NADPH and FAD, capable of reducing cytochrome c. In Escherichia coli (strain K12), this protein is 1,2-phenylacetyl-CoA epoxidase, subunit E (paaE).